Here is a 276-residue protein sequence, read N- to C-terminus: Tryptophan synthase alpha chain (276 aa).

Residues Glu46 and Glu57 each act as proton acceptor in the active site.

It belongs to the TrpA family. In terms of assembly, tetramer of two alpha and two beta chains.

The enzyme catalyses (1S,2R)-1-C-(indol-3-yl)glycerol 3-phosphate + L-serine = D-glyceraldehyde 3-phosphate + L-tryptophan + H2O. It functions in the pathway amino-acid biosynthesis; L-tryptophan biosynthesis; L-tryptophan from chorismate: step 5/5. In terms of biological role, the alpha subunit is responsible for the aldol cleavage of indoleglycerol phosphate to indole and glyceraldehyde 3-phosphate. This chain is Tryptophan synthase alpha chain, found in Halobacterium salinarum (strain ATCC 29341 / DSM 671 / R1).